Reading from the N-terminus, the 360-residue chain is MKTATAVINRRALRHNLQRIRQLAPDSQVVAIVKANAYGHGMIEAAHTFCDADCYGVARLSEALALRAAGITKPIVLLEGFFSADDLPLLVEHQLETAVHSPEQLAALEQATLSQPLRVWMKLDTGMHRLGVLPEHADAFWQRLTACRNVVQPVNIMSHFSRADEPEAGTTERQLTCFDAFTQGKPGAQSIAASGGILLWPQSHRDRVRPGIILYGVSPLDNEDAAHFGFQPAMTFTSHLIAVREHHTGEAVGYGGTWTSPRNTRLGVVAVGYGDGYPRCAPAGTPVLINGREVPLSGRVSMDMITVDLGPDAQDKVGDEVILWGPTLPVERIAAHTGASAYELITRLTQRTALEYVDGE.

Lys34 serves as the catalytic Proton acceptor; specific for D-alanine. The residue at position 34 (Lys34) is an N6-(pyridoxal phosphate)lysine. Arg129 contributes to the substrate binding site. The active-site Proton acceptor; specific for L-alanine is the Tyr254. A substrate-binding site is contributed by Met302.

The protein belongs to the alanine racemase family. Pyridoxal 5'-phosphate serves as cofactor.

It catalyses the reaction L-alanine = D-alanine. The protein operates within amino-acid biosynthesis; D-alanine biosynthesis; D-alanine from L-alanine: step 1/1. Functionally, catalyzes the interconversion of L-alanine and D-alanine. May also act on other amino acids. This is Alanine racemase (alr) from Pectobacterium carotovorum subsp. carotovorum (strain PC1).